Reading from the N-terminus, the 657-residue chain is Zinc transporter ZIP4 (657 aa).

Residues 1–22 (MMLPKSLTQGLLLAMLVGTAAM) form the signal peptide. Over 23-335 (VQPYHLLSLL…QDQLSQAERY (313 aa)) the chain is Extracellular. 3 N-linked (GlcNAc...) asparagine glycosylation sites follow: Asn193, Asn220, and Asn268. A helical transmembrane segment spans residues 336–356 (LYGSLATLLICLCAVFGLLLL). Residues 357–374 (TCAKCSTATHYIMQTFLS) are Cytoplasmic-facing. Residues 375-395 (LAVGALTGDALLHLIPKVLGL) traverse the membrane as a helical segment. The Extracellular segment spans residues 396–417 (HTHSGEVHSHEEESIGGQSTWR). Residues 418–438 (LLAVLGGFYIFFLFESFFNLL) form a helical membrane-spanning segment. Residues 439–508 (LPRDQDHEKD…LRAELRMLPY (70 aa)) are Cytoplasmic-facing. An Essential for SLC39A4 endocytosis motif is present at residues 462-464 (LQL). A disordered region spans residues 467–491 (SNLRQSKQPHESSRSDLVTEETPEL). The helical transmembrane segment at 509 to 528 (LITLGDAVHNFADGLAVGAA) threads the bilayer. His517, Asn518, and Asp521 together coordinate Zn(2+). The Extracellular portion of the chain corresponds to 529–536 (FSSTWKTG). A helical transmembrane segment spans residues 537–563 (LATSLAVFCHELPHELGDFAALLHAGL). Positions 546, 547, and 550 each coordinate Zn(2+). At 564–568 (TVKRA) the chain is on the cytoplasmic side. The chain crosses the membrane as a helical span at residues 569-589 (LLLNLASALTAFAGLYVALAV). Over 590–597 (GVGEEGET) the chain is Extracellular. A helical transmembrane segment spans residues 598–618 (WILAVATGLFLYVALCDMLPA). Residues 619 to 627 (MMNVRDQRP) lie on the Cytoplasmic side of the membrane. Residues 628-648 (WLLFLLHNVGLLGGWTILLLL) form a helical membrane-spanning segment. Topologically, residues 649-657 (SLYEDSITF) are extracellular.

This sequence belongs to the ZIP transporter (TC 2.A.5) family. As to quaternary structure, homodimer; homodimerization is mediated by the transmembrane domain. In terms of processing, the extracellular N-terminal ectodomain is cleaved when cells are Zn(2+) deficient, N-terminally cleaved SLC39A4 is internalized at a faster rate. Under excess Zn(2+) conditions, SLC39A4 on the cell surface is rapidly endocytosed, ubiquitinated and degraded. Post-translationally, glycosylated. As to expression, expressed in duodenum, jejunum, and ileum.

The protein resides in the cell membrane. The protein localises to the recycling endosome membrane. It localises to the apical cell membrane. The catalysed reaction is Zn(2+)(in) = Zn(2+)(out). In terms of biological role, selective transporter that mediates the uptake of Zn(2+). Plays an essential role for dietary zinc uptake from small intestine. The Zn(2+) uniporter activity is regulated by zinc availability. Also exhibits polyspecific binding and transport of Cu(2+), Cd(2+) and possibly Ni(2+) but at higher concentrations. In Rattus norvegicus (Rat), this protein is Zinc transporter ZIP4 (Slc39a4).